Consider the following 356-residue polypeptide: Leucine-rich repeat and transmembrane domain-containing protein 1 (356 aa).

Positions 1-32 (MLNEGLCCGAWAMKGTLLLVSSVGLLLPGVGS) are cleaved as a signal peptide. The region spanning 33–62 (CPMKCLCHPSSNSVDCSGQGLSKVPRDLPP) is the LRRNT domain. Topologically, residues 33–299 (CPMKCLCHPS…PTNLRHAVAT (267 aa)) are extracellular. LRR repeat units follow at residues 63–84 (WTVT…AFQS), 87–108 (LLST…AFYG), 111–132 (HLRV…FAHA), 135–156 (GLRE…LGKP), and 159–180 (NLTV…LLEA). N-linked (GlcNAc...) asparagine glycosylation is found at Asn92 and Asn116. Asn159 carries N-linked (GlcNAc...) asparagine glycosylation. The 55-residue stretch at 192 to 246 (NPWICDCHLLGLKLWLERFTFQGGETDGAICRLPEPWQGKALLSIPHELYQPCSL) folds into the LRRCT domain. Residues 255-277 (LVQQPGSAPQDAQKSHENSSGQQ) are compositionally biased toward polar residues. Residues 255-288 (LVQQPGSAPQDAQKSHENSSGQQDPLECEAKPKP) form a disordered region. The chain crosses the membrane as a helical span at residues 300–320 (VVITGVVCGIVCLMMLAAAIY). Over 321-356 (GCTYAAITAQYQGRPLASARKSEKMGSKELMDSSSA) the chain is Cytoplasmic.

It is found in the membrane. The sequence is that of Leucine-rich repeat and transmembrane domain-containing protein 1 (Lrtm1) from Mus musculus (Mouse).